A 485-amino-acid chain; its full sequence is Aspartyl/glutamyl-tRNA(Asn/Gln) amidotransferase subunit B (485 aa).

It belongs to the GatB/GatE family. GatB subfamily. In terms of assembly, heterotrimer of A, B and C subunits.

The enzyme catalyses L-glutamyl-tRNA(Gln) + L-glutamine + ATP + H2O = L-glutaminyl-tRNA(Gln) + L-glutamate + ADP + phosphate + H(+). The catalysed reaction is L-aspartyl-tRNA(Asn) + L-glutamine + ATP + H2O = L-asparaginyl-tRNA(Asn) + L-glutamate + ADP + phosphate + 2 H(+). Functionally, allows the formation of correctly charged Asn-tRNA(Asn) or Gln-tRNA(Gln) through the transamidation of misacylated Asp-tRNA(Asn) or Glu-tRNA(Gln) in organisms which lack either or both of asparaginyl-tRNA or glutaminyl-tRNA synthetases. The reaction takes place in the presence of glutamine and ATP through an activated phospho-Asp-tRNA(Asn) or phospho-Glu-tRNA(Gln). This is Aspartyl/glutamyl-tRNA(Asn/Gln) amidotransferase subunit B from Ruminiclostridium cellulolyticum (strain ATCC 35319 / DSM 5812 / JCM 6584 / H10) (Clostridium cellulolyticum).